The primary structure comprises 220 residues: Inner membrane protein YqjA (220 aa).

At 1–27 (MELLTQLLQALWAQDFETLANPSMIGM) the chain is on the periplasmic side. The chain crosses the membrane as a helical span at residues 28 to 48 (LYFVLFVILFLENGLLPAAFL). Topologically, residues 49–52 (PGDS) are cytoplasmic. The next 2 membrane-spanning stretches (helical) occupy residues 53–73 (LLVL…QTIL) and 74–94 (LLTV…RWLG). Topologically, residues 95 to 154 (NTRTVQNWLSHLPAHYHQRAHHLFHKHGLSALLIGRFIAFVRTLLPTIAGLSGLNNARFQ) are cytoplasmic. The chain crosses the membrane as a helical span at residues 155-175 (FFNWMSGLLWVLILTTLGYML). At 176 to 191 (GKTPVFLKYEDQLMSC) the chain is on the periplasmic side. Residues 192 to 212 (LMLLPVVLLVFGLAGSLVVLW) form a helical membrane-spanning segment. Topologically, residues 213 to 220 (KKKYGNRG) are cytoplasmic.

It belongs to the DedA family.

The protein localises to the cell inner membrane. Functionally, may be a membrane transporter required for proton motive force (PMF)-dependent drug efflux. Required, with YghB, for the proper export of certain periplasmic amidases and, possibly, other Tat substrates. May play a role in determining membrane lipid composition. This Escherichia coli (strain K12) protein is Inner membrane protein YqjA (yqjA).